Here is a 142-residue protein sequence, read N- to C-terminus: Hemoglobin subunit alpha (142 aa).

One can recognise a Globin domain in the interval 2-142 (VLSSQNKKAI…VAYELSSCYR (141 aa)). Histidine 60 provides a ligand contact to O2. Histidine 89 is a heme b binding site.

This sequence belongs to the globin family. In terms of assembly, heterotetramer of two alpha chains and two beta chains. Red blood cells.

Its function is as follows. Involved in oxygen transport from gills to the various peripheral tissues. This Hemitrygon akajei (Red stingray) protein is Hemoglobin subunit alpha (hba).